The chain runs to 229 residues: Enolase-phosphatase E1 (229 aa).

This sequence belongs to the HAD-like hydrolase superfamily. MasA/MtnC family. In terms of assembly, monomer. Mg(2+) is required as a cofactor.

It carries out the reaction 5-methylsulfanyl-2,3-dioxopentyl phosphate + H2O = 1,2-dihydroxy-5-(methylsulfanyl)pent-1-en-3-one + phosphate. It participates in amino-acid biosynthesis; L-methionine biosynthesis via salvage pathway; L-methionine from S-methyl-5-thio-alpha-D-ribose 1-phosphate: step 3/6. The protein operates within amino-acid biosynthesis; L-methionine biosynthesis via salvage pathway; L-methionine from S-methyl-5-thio-alpha-D-ribose 1-phosphate: step 4/6. Functionally, bifunctional enzyme that catalyzes the enolization of 2,3-diketo-5-methylthiopentyl-1-phosphate (DK-MTP-1-P) into the intermediate 2-hydroxy-3-keto-5-methylthiopentenyl-1-phosphate (HK-MTPenyl-1-P), which is then dephosphorylated to form the acireductone 1,2-dihydroxy-3-keto-5-methylthiopentene (DHK-MTPene). In Yersinia pseudotuberculosis serotype IB (strain PB1/+), this protein is Enolase-phosphatase E1.